A 218-amino-acid chain; its full sequence is Peptide methionine sulfoxide reductase A2 (218 aa).

Residues 1–19 (MDSSLKTQEPQVVETSPSP) are compositionally biased toward polar residues. The interval 1–30 (MDSSLKTQEPQVVETSPSPVAQEPPQVADK) is disordered. Residue serine 205 is modified to Phosphoserine.

It belongs to the MsrA Met sulfoxide reductase family.

It is found in the cytoplasm. Its subcellular location is the cytosol. The enzyme catalyses L-methionyl-[protein] + [thioredoxin]-disulfide + H2O = L-methionyl-(S)-S-oxide-[protein] + [thioredoxin]-dithiol. The catalysed reaction is [thioredoxin]-disulfide + L-methionine + H2O = L-methionine (S)-S-oxide + [thioredoxin]-dithiol. With respect to regulation, activated during dark in short day conditions. In terms of biological role, catalyzes the reduction of methionine sulfoxide (MetSO) to methionine in proteins. Plays a protective role against oxidative stress by restoring activity to proteins that have been inactivated by methionine oxidation. Prevents cellular oxidative damage in long nights. MSRA family specifically reduces the MetSO S-enantiomer. The chain is Peptide methionine sulfoxide reductase A2 (MRSA2) from Arabidopsis thaliana (Mouse-ear cress).